The primary structure comprises 217 residues: MSTANRTFTGLLGTKLGMTQVWDENNKLIPVTVVQITPNVVTQVRTPEVDGYGAIQIAYGQIDPRKADKPSTGHFDKAGVTPRRHLTEVRTADFAEYTLGQEITVGAFEPGTKVDVVGTSKGKGFAGVMKRHNFKGVSASHGSHRNHRKPGSIGASSTPSRVFKGMRMAGRMGGERVTVLNLVVHSVDAEKGLLLVKGAVPGARGRIVFVRNAVKGK.

Residues 137–160 (VSASHGSHRNHRKPGSIGASSTPS) are disordered.

The protein belongs to the universal ribosomal protein uL3 family. Part of the 50S ribosomal subunit. Forms a cluster with proteins L14 and L19.

In terms of biological role, one of the primary rRNA binding proteins, it binds directly near the 3'-end of the 23S rRNA, where it nucleates assembly of the 50S subunit. The chain is Large ribosomal subunit protein uL3 from Clavibacter sepedonicus (Clavibacter michiganensis subsp. sepedonicus).